The following is a 667-amino-acid chain: MADLSSRVNELHDLLNQYSYEYYVEDNPSVPDSEYDKLLHELIKIEEEHPEYKTVDSPTVRVGGEAQASFNKVNHDTPMLSLGNAFNEDDLRKFDQRIREQIGNVEYMCELKIDGLAVSLKYVDGYFVQGLTRGDGTTGEDITENLKTIHAIPLKMKEPLNVEVRGEAYMPRRSFLRLNEEKEKNDEQLFANPRNAAAGSLRQLDSKLTAKRKLSVFIYSVNDFTDFNARSQSEALDELNKLGFTTNKNRARVNNIDGVLEYIEKWTSQRESLPYDIDGIVIKVNDLDQQDEMGFTQKSPRWAIAYKFPAEEVVTKLLDIELSIGRTGVVTPTAILEPVKVAGTTVSRASLHNEDLIHDRDIRIGDSVVVKKAGDIIPEVVRSIPERRPEDAVTYHMPTHCPSCGHELVRIEGEVALRCINPKCQAQLVEGLIHFVSRQAMNIDGLGTKIIQQLYQSELIKDVADIFYLTEEDLLPLDRMGQKKVDNLLAAIQQAKDNSLENLLFGLGIRHLGVKASQVLAEKYETIDRLLTVTEAELVEIHDIGDKVAQSVVTYLENEDIRALIQKLKDKHVNMIYKGIKTSDIEGHPEFSGKTIVLTGKLHQMTRNEASKWLASQGAKVTSSVTKNTDVVIAGEDAGSKLTKAQSLGIEIWTEQQFVDKQNELNS.

NAD(+)-binding positions include 32-36, 81-82, and E110; these read DSEYD and SL. K112 (N6-AMP-lysine intermediate) is an active-site residue. NAD(+) contacts are provided by R133, E167, K283, and K307. 4 residues coordinate Zn(2+): C401, C404, C419, and C424. Residues 586–667 form the BRCT domain; the sequence is EGHPEFSGKT…FVDKQNELNS (82 aa).

The protein belongs to the NAD-dependent DNA ligase family. LigA subfamily. Mg(2+) is required as a cofactor. Mn(2+) serves as cofactor.

It catalyses the reaction NAD(+) + (deoxyribonucleotide)n-3'-hydroxyl + 5'-phospho-(deoxyribonucleotide)m = (deoxyribonucleotide)n+m + AMP + beta-nicotinamide D-nucleotide.. DNA ligase that catalyzes the formation of phosphodiester linkages between 5'-phosphoryl and 3'-hydroxyl groups in double-stranded DNA using NAD as a coenzyme and as the energy source for the reaction. It is essential for DNA replication and repair of damaged DNA. This is DNA ligase from Staphylococcus aureus (strain COL).